Here is a 479-residue protein sequence, read N- to C-terminus: Aspartyl/glutamyl-tRNA(Asn/Gln) amidotransferase subunit B (479 aa).

This sequence belongs to the GatB/GatE family. GatB subfamily. Heterotrimer of A, B and C subunits.

The catalysed reaction is L-glutamyl-tRNA(Gln) + L-glutamine + ATP + H2O = L-glutaminyl-tRNA(Gln) + L-glutamate + ADP + phosphate + H(+). It catalyses the reaction L-aspartyl-tRNA(Asn) + L-glutamine + ATP + H2O = L-asparaginyl-tRNA(Asn) + L-glutamate + ADP + phosphate + 2 H(+). In terms of biological role, allows the formation of correctly charged Asn-tRNA(Asn) or Gln-tRNA(Gln) through the transamidation of misacylated Asp-tRNA(Asn) or Glu-tRNA(Gln) in organisms which lack either or both of asparaginyl-tRNA or glutaminyl-tRNA synthetases. The reaction takes place in the presence of glutamine and ATP through an activated phospho-Asp-tRNA(Asn) or phospho-Glu-tRNA(Gln). This Streptococcus pyogenes serotype M3 (strain ATCC BAA-595 / MGAS315) protein is Aspartyl/glutamyl-tRNA(Asn/Gln) amidotransferase subunit B.